Here is a 196-residue protein sequence, read N- to C-terminus: Small ribosomal subunit protein uS4c (196 aa).

The disordered stretch occupies residues 16–40 (GALPGLTRKTPKSGSNLKKKFHSGK). Positions 89-152 (MRLDNTLFRL…RSKDLVRNSI (64 aa)) constitute an S4 RNA-binding domain.

Belongs to the universal ribosomal protein uS4 family. In terms of assembly, part of the 30S ribosomal subunit. Contacts protein S5. The interaction surface between S4 and S5 is involved in control of translational fidelity.

The protein resides in the plastid. It localises to the chloroplast. Its function is as follows. One of the primary rRNA binding proteins, it binds directly to 16S rRNA where it nucleates assembly of the body of the 30S subunit. In terms of biological role, with S5 and S12 plays an important role in translational accuracy. In Anthoxanthum odoratum (Sweet vernal grass), this protein is Small ribosomal subunit protein uS4c (rps4).